The sequence spans 225 residues: Ribulose-phosphate 3-epimerase (225 aa).

Substrate is bound at residue Ser10. A divalent metal cation-binding residues include His35, Asp37, and His68. Asp37 serves as the catalytic Proton acceptor. Residues His68, 144 to 147 (GFGG), and 175 to 177 (DGG) contribute to the substrate site. Asp175 provides a ligand contact to a divalent metal cation. Asp175 functions as the Proton donor in the catalytic mechanism.

It belongs to the ribulose-phosphate 3-epimerase family. The cofactor is a divalent metal cation.

The catalysed reaction is D-ribulose 5-phosphate = D-xylulose 5-phosphate. It functions in the pathway carbohydrate degradation. Its function is as follows. Catalyzes the reversible epimerization of D-ribulose 5-phosphate to D-xylulose 5-phosphate. This Rhodospirillum rubrum protein is Ribulose-phosphate 3-epimerase.